The primary structure comprises 245 residues: tRNA pseudouridine synthase A (245 aa).

The active-site Nucleophile is Asp52. Residue Tyr111 participates in substrate binding.

The protein belongs to the tRNA pseudouridine synthase TruA family. Homodimer.

It carries out the reaction uridine(38/39/40) in tRNA = pseudouridine(38/39/40) in tRNA. Functionally, formation of pseudouridine at positions 38, 39 and 40 in the anticodon stem and loop of transfer RNAs. This Rickettsia akari (strain Hartford) protein is tRNA pseudouridine synthase A.